We begin with the raw amino-acid sequence, 677 residues long: Methionine--tRNA ligase (677 aa).

Positions 15-25 match the 'HIGH' region motif; that stretch reads PYANGSIHLGH. Cys-146, Cys-149, Cys-159, and Cys-162 together coordinate Zn(2+). The short motif at 333-337 is the 'KMSKS' region element; that stretch reads KMSKS. Position 336 (Lys-336) interacts with ATP. One can recognise a tRNA-binding domain in the interval 575–677; that stretch reads DFAKVDLRVA…AGAKPGHQVK (103 aa).

This sequence belongs to the class-I aminoacyl-tRNA synthetase family. MetG type 1 subfamily. Homodimer. It depends on Zn(2+) as a cofactor.

It localises to the cytoplasm. The catalysed reaction is tRNA(Met) + L-methionine + ATP = L-methionyl-tRNA(Met) + AMP + diphosphate. In terms of biological role, is required not only for elongation of protein synthesis but also for the initiation of all mRNA translation through initiator tRNA(fMet) aminoacylation. The sequence is that of Methionine--tRNA ligase from Escherichia coli O81 (strain ED1a).